We begin with the raw amino-acid sequence, 307 residues long: MQKFDVKTFQGLILQLQDYWSRQGCTIIQPLDMEVGAGTSHPMTCLRALGPEPIACAYVQPSRRPTDGRYGENPNRLQHYYQFQVIIKPSPDNIQELYLGSLKELGMDPEIHDIRFVEDNWENPTLGAWGLGWEVWLNGMEVTQFTYFQQVGGLECKPVTGEITYGLERLAMYIQGVDSVYDLVWSDGPLGKTTYGDVFHQNEVEQSTYNFEHADVDFLFHCFEQYEKEAQHLLALETPLPLPAYERILKAAHSFNLLDARKAISVTERQRYILRIRTLTKAVAEAYYASREALGFPMCKRTENKQG.

It belongs to the class-II aminoacyl-tRNA synthetase family. As to quaternary structure, tetramer of two alpha and two beta subunits.

Its subcellular location is the cytoplasm. It catalyses the reaction tRNA(Gly) + glycine + ATP = glycyl-tRNA(Gly) + AMP + diphosphate. This is Glycine--tRNA ligase alpha subunit from Aeromonas salmonicida (strain A449).